We begin with the raw amino-acid sequence, 1136 residues long: Phytochrome (1136 aa).

The interval 1 to 28 is disordered; sequence MSTTRPRAATHSASSGSVSRSSKHSARV. Over residues 11–20 the composition is skewed to low complexity; that stretch reads HSASSGSVSR. In terms of domain architecture, GAF spans 231–414; it reads DIRLLCDTVV…VFGIQLNKEV (184 aa). Cysteine 336 contributes to the phytochromobilin binding site. 2 PAS domains span residues 629-699 and 762-833; these read VTNE…LQGE and DYRA…TKLR. One can recognise a Histidine kinase domain in the interval 913–1132; the sequence is YIRQEIRNPL…IINVEFPLAQ (220 aa).

It belongs to the phytochrome family. Homodimer. Contains one covalently linked phytochromobilin chromophore.

Functionally, regulatory photoreceptor which exists in two forms that are reversibly interconvertible by light: the Pr form that absorbs maximally in the red region of the spectrum and the Pfr form that absorbs maximally in the far-red region. Photoconversion of Pr to Pfr induces an array of morphogenic responses, whereas reconversion of Pfr to Pr cancels the induction of those responses. Pfr controls the expression of a number of nuclear genes including those encoding the small subunit of ribulose-bisphosphate carboxylase, chlorophyll A/B binding protein, protochlorophyllide reductase, rRNA, etc. It also controls the expression of its own gene(s) in a negative feedback fashion. This is Phytochrome from Picea abies (Norway spruce).